Reading from the N-terminus, the 40-residue chain is U2-ctenitoxin-Pr1a (40 aa).

Disulfide bonds link C2/C17, C9/C22, C16/C32, and C24/C30.

In terms of tissue distribution, expressed by the venom gland.

The protein resides in the secreted. Functionally, neurotoxin. This is U2-ctenitoxin-Pr1a from Phoneutria reidyi (Brazilian Amazonian armed spider).